Consider the following 294-residue polypeptide: Protein RarD (294 aa).

Residues 1 to 11 (MDAKQTRQGVL) lie on the Cytoplasmic side of the membrane. Residues 12–34 (LALAAYFIWGIAPAYFKLIYYVP) form a helical membrane-spanning segment. Residues 18–145 (FIWGIAPAYF…AVCGVLVQLW (128 aa)) enclose the EamA domain. At 35 to 37 (ADE) the chain is on the periplasmic side. Residues 38–60 (ILTHRVIWSFFFMVALLSVSRQW) form a helical membrane-spanning segment. Over 61 to 72 (RQVKRLLKTPKK) the chain is Cytoplasmic. Residues 73–95 (IFLLALSAVLVGGNWLLFIWAVN) traverse the membrane as a helical segment. Residues 96–99 (NHHM) are Periplasmic-facing. Residues 100–122 (LEASLGYFINPLVNILLGMIFLG) traverse the membrane as a helical segment. The Cytoplasmic portion of the chain corresponds to 123–128 (ERFRRM). The helical transmembrane segment at 129-146 (QWLAVILAVCGVLVQLWT) threads the bilayer. The Periplasmic portion of the chain corresponds to 147-149 (FGS). A helical membrane pass occupies residues 150–167 (LPIIALGLAFSFAFYGLV). Residues 168–179 (RKKIAVEAQTGM) lie on the Cytoplasmic side of the membrane. A helical transmembrane segment spans residues 180 to 197 (LVETLWLLPVAAIYLFSI). Residues 198-211 (ADSATSHMGQNALS) are Periplasmic-facing. The chain crosses the membrane as a helical span at residues 212–234 (LNLLLMAAGVVTTIPLLCFTGAA). At 235-238 (TRLR) the chain is on the cytoplasmic side. Residues 239 to 261 (LSTLGFFQYIGPTLMFLLAVTFY) form a helical membrane-spanning segment. Topologically, residues 262 to 270 (GEVPGADKM) are periplasmic. A helical transmembrane segment spans residues 271–290 (VTFAFIWVALAIFVMDAIYT). Topologically, residues 291-294 (QRKK) are cytoplasmic.

Belongs to the EamA transporter family.

It localises to the cell inner membrane. In Salmonella typhi, this protein is Protein RarD (rarD).